Consider the following 337-residue polypeptide: Eukaryotic translation initiation factor 3 subunit H (337 aa).

One can recognise an MPN domain in the interval 21 to 153 (VQCDGLAVMK…LKAYRLTPQA (133 aa)).

It belongs to the eIF-3 subunit H family. Component of the eukaryotic translation initiation factor 3 (eIF-3) complex. The eIF-3 complex interacts with pix. Interacts with mxt.

Its subcellular location is the cytoplasm. In terms of biological role, component of the eukaryotic translation initiation factor 3 (eIF-3) complex, which is involved in protein synthesis of a specialized repertoire of mRNAs and, together with other initiation factors, stimulates binding of mRNA and methionyl-tRNAi to the 40S ribosome. The eIF-3 complex specifically targets and initiates translation of a subset of mRNAs involved in cell proliferation. This Drosophila willistoni (Fruit fly) protein is Eukaryotic translation initiation factor 3 subunit H.